The following is a 501-amino-acid chain: Probable cytochrome P450 28d2 (501 aa).

Cys446 contacts heme.

The protein belongs to the cytochrome P450 family. Heme is required as a cofactor.

It localises to the endoplasmic reticulum membrane. It is found in the microsome membrane. In terms of biological role, may be involved in the metabolism of insect hormones and in the breakdown of synthetic insecticides. This chain is Probable cytochrome P450 28d2 (Cyp28d2), found in Drosophila melanogaster (Fruit fly).